A 337-amino-acid chain; its full sequence is Glyceraldehyde-3-phosphate dehydrogenase (337 aa).

NAD(+)-binding positions include 12–13 (RI), aspartate 34, and lysine 79. D-glyceraldehyde 3-phosphate contacts are provided by residues 150 to 152 (SCT), threonine 181, 210 to 211 (TG), and arginine 233. The active-site Nucleophile is cysteine 151. Asparagine 315 serves as a coordination point for NAD(+).

It belongs to the glyceraldehyde-3-phosphate dehydrogenase family. Homotetramer.

The protein localises to the cytoplasm. It catalyses the reaction D-glyceraldehyde 3-phosphate + phosphate + NAD(+) = (2R)-3-phospho-glyceroyl phosphate + NADH + H(+). It participates in carbohydrate degradation; glycolysis; pyruvate from D-glyceraldehyde 3-phosphate: step 1/5. The protein is Glyceraldehyde-3-phosphate dehydrogenase (GPD1) of Cochliobolus heterostrophus (Southern corn leaf blight fungus).